The following is a 105-amino-acid chain: Integration host factor subunit beta (105 aa).

The protein belongs to the bacterial histone-like protein family. Heterodimer of an alpha and a beta chain.

Its function is as follows. This protein is one of the two subunits of integration host factor, a specific DNA-binding protein that functions in genetic recombination as well as in transcriptional and translational control. This Nitrosomonas europaea (strain ATCC 19718 / CIP 103999 / KCTC 2705 / NBRC 14298) protein is Integration host factor subunit beta.